Consider the following 269-residue polypeptide: 4-hydroxy-tetrahydrodipicolinate reductase (269 aa).

Residues 8–13 (GAAGRM) and Glu34 each bind NAD(+). Residue Arg35 participates in NADP(+) binding. NAD(+)-binding positions include 98 to 100 (GTT) and 122 to 125 (APNY). His155 acts as the Proton donor/acceptor in catalysis. Position 156 (His156) interacts with (S)-2,3,4,5-tetrahydrodipicolinate. The active-site Proton donor is the Lys159. 165 to 166 (GT) is a binding site for (S)-2,3,4,5-tetrahydrodipicolinate.

This sequence belongs to the DapB family.

The protein resides in the cytoplasm. The catalysed reaction is (S)-2,3,4,5-tetrahydrodipicolinate + NAD(+) + H2O = (2S,4S)-4-hydroxy-2,3,4,5-tetrahydrodipicolinate + NADH + H(+). The enzyme catalyses (S)-2,3,4,5-tetrahydrodipicolinate + NADP(+) + H2O = (2S,4S)-4-hydroxy-2,3,4,5-tetrahydrodipicolinate + NADPH + H(+). It functions in the pathway amino-acid biosynthesis; L-lysine biosynthesis via DAP pathway; (S)-tetrahydrodipicolinate from L-aspartate: step 4/4. Catalyzes the conversion of 4-hydroxy-tetrahydrodipicolinate (HTPA) to tetrahydrodipicolinate. The chain is 4-hydroxy-tetrahydrodipicolinate reductase from Vibrio atlanticus (strain LGP32) (Vibrio splendidus (strain Mel32)).